A 427-amino-acid polypeptide reads, in one-letter code: Histidine--tRNA ligase (427 aa).

The protein belongs to the class-II aminoacyl-tRNA synthetase family. Homodimer.

It localises to the cytoplasm. It catalyses the reaction tRNA(His) + L-histidine + ATP = L-histidyl-tRNA(His) + AMP + diphosphate + H(+). The protein is Histidine--tRNA ligase of Deinococcus radiodurans (strain ATCC 13939 / DSM 20539 / JCM 16871 / CCUG 27074 / LMG 4051 / NBRC 15346 / NCIMB 9279 / VKM B-1422 / R1).